The chain runs to 234 residues: Small ribosomal subunit protein uS2c (234 aa).

Belongs to the universal ribosomal protein uS2 family.

The protein localises to the plastid. It localises to the chloroplast. The polypeptide is Small ribosomal subunit protein uS2c (rps2) (Pinus koraiensis (Korean pine)).